Here is a 343-residue protein sequence, read N- to C-terminus: L-threonine 3-dehydrogenase (343 aa).

Zn(2+) is bound at residue Cys40. Residues Thr42 and His45 each act as charge relay system in the active site. Zn(2+)-binding residues include His65, Glu66, Cys95, Cys98, Cys101, and Cys109. NAD(+) contacts are provided by residues Ile177, Asp197, Arg202, 264-266, and 288-289; these read LGI and IY.

It belongs to the zinc-containing alcohol dehydrogenase family. In terms of assembly, homotetramer. It depends on Zn(2+) as a cofactor.

Its subcellular location is the cytoplasm. It catalyses the reaction L-threonine + NAD(+) = (2S)-2-amino-3-oxobutanoate + NADH + H(+). It participates in amino-acid degradation; L-threonine degradation via oxydo-reductase pathway; glycine from L-threonine: step 1/2. Its function is as follows. Catalyzes the NAD(+)-dependent oxidation of L-threonine to 2-amino-3-ketobutyrate. This Vibrio atlanticus (strain LGP32) (Vibrio splendidus (strain Mel32)) protein is L-threonine 3-dehydrogenase.